The chain runs to 106 residues: Thiosulfate sulfurtransferase GlpE (106 aa).

In terms of domain architecture, Rhodanese spans 17–105 (SRGEARLVDI…WHRASLPVEA (89 aa)). Catalysis depends on Cys65, which acts as the Cysteine persulfide intermediate.

It belongs to the GlpE family.

It localises to the cytoplasm. The catalysed reaction is thiosulfate + hydrogen cyanide = thiocyanate + sulfite + 2 H(+). It carries out the reaction thiosulfate + [thioredoxin]-dithiol = [thioredoxin]-disulfide + hydrogen sulfide + sulfite + 2 H(+). Transferase that catalyzes the transfer of sulfur from thiosulfate to thiophilic acceptors such as cyanide or dithiols. May function in a CysM-independent thiosulfate assimilation pathway by catalyzing the conversion of thiosulfate to sulfite, which can then be used for L-cysteine biosynthesis. The polypeptide is Thiosulfate sulfurtransferase GlpE (Vibrio vulnificus (strain CMCP6)).